The following is a 97-amino-acid chain: Cell division protein FtsL (97 aa).

At M1 to T11 the chain is on the cytoplasmic side. The chain crosses the membrane as a helical span at residues G12–Y32. The Periplasmic segment spans residues S33 to P97.

It belongs to the FtsL family. Part of a complex composed of FtsB, FtsL and FtsQ.

It is found in the cell inner membrane. In terms of biological role, essential cell division protein. May link together the upstream cell division proteins, which are predominantly cytoplasmic, with the downstream cell division proteins, which are predominantly periplasmic. This is Cell division protein FtsL from Pseudomonas aeruginosa (strain ATCC 15692 / DSM 22644 / CIP 104116 / JCM 14847 / LMG 12228 / 1C / PRS 101 / PAO1).